A 58-amino-acid polypeptide reads, in one-letter code: Large ribosomal subunit protein uL30 (58 aa).

The protein belongs to the universal ribosomal protein uL30 family. Part of the 50S ribosomal subunit.

The protein is Large ribosomal subunit protein uL30 of Bacteroides thetaiotaomicron (strain ATCC 29148 / DSM 2079 / JCM 5827 / CCUG 10774 / NCTC 10582 / VPI-5482 / E50).